The sequence spans 828 residues: Periplasmic nitrate reductase (828 aa).

A signal peptide (tat-type signal) is located at residues 1–31 (MKLSRRSFMKANAVAAAAAAAGLSVPGVARA). In terms of domain architecture, 4Fe-4S Mo/W bis-MGD-type spans 39 to 95 (IKWDKAPCRFCGTGCGVLVGTQQGRVVACQGDPDAPVNRGLNCIKGYFLPKIMYGKD). Residues cysteine 46, cysteine 49, cysteine 53, and cysteine 81 each contribute to the [4Fe-4S] cluster site. Mo-bis(molybdopterin guanine dinucleotide)-binding positions include lysine 83, glutamine 150, asparagine 175, cysteine 179, 212 to 219 (WGSNMAEM), 243 to 247 (STYQH), 262 to 264 (QSD), methionine 372, glutamine 376, asparagine 482, 508 to 509 (SD), lysine 531, aspartate 558, and 718 to 727 (TGRVLEHWHT). Residue phenylalanine 794 participates in substrate binding. Residues asparagine 802 and lysine 819 each coordinate Mo-bis(molybdopterin guanine dinucleotide).

This sequence belongs to the prokaryotic molybdopterin-containing oxidoreductase family. NasA/NapA/NarB subfamily. As to quaternary structure, component of the periplasmic nitrate reductase NapAB complex composed of NapA and NapB. Requires [4Fe-4S] cluster as cofactor. It depends on Mo-bis(molybdopterin guanine dinucleotide) as a cofactor. Post-translationally, predicted to be exported by the Tat system. The position of the signal peptide cleavage has not been experimentally proven.

The protein localises to the periplasm. It catalyses the reaction 2 Fe(II)-[cytochrome] + nitrate + 2 H(+) = 2 Fe(III)-[cytochrome] + nitrite + H2O. In terms of biological role, catalytic subunit of the periplasmic nitrate reductase complex NapAB. Receives electrons from NapB and catalyzes the reduction of nitrate to nitrite. The protein is Periplasmic nitrate reductase of Escherichia coli O127:H6 (strain E2348/69 / EPEC).